The sequence spans 478 residues: MAKDKKFVEDITPMDEDFAQWYTDIVKKAELADYSSIRGCMIIRPNGYAIWENIQKYVDTKLKEYGHENVSMPIFIPENLLQKEKDHVEGFAPEVAWVTHGGDDELAERLCVRPTSETLFCEHYAKIVQSYKDLPKLYNQWCSVVRWEKTTRPFLRTTEFLWQEGHTIHETKEEAESHSLKILNMYSRLCEDMLAMPVVMGKKTDKEKFAGADDTYTIESLMHDGKALQAGTSHYLGQNFSKAFAIQFSDRNGKLDYPHYTTWAVTTRLIGAIIMVHGDNSGLKLPPRIAPTQAVIIPVAQHKEGVLEKAEELKERLAKVVRVKLDDSDKMPGWKYSEYEMKGIPLRIEIGPKDIEKNQAVLVRRDNREKTIVSLDEIEIKVQEMLDIIHNSMLEEAKKTRDEKTYVATNMEEFEDTIENKPGFIKAMWCGDKACEDKIREVTGATSRCMPFEQEVVSDTCVCCGKKAKNLVYWGRAY.

Belongs to the class-II aminoacyl-tRNA synthetase family. ProS type 3 subfamily. Homodimer.

Its subcellular location is the cytoplasm. It carries out the reaction tRNA(Pro) + L-proline + ATP = L-prolyl-tRNA(Pro) + AMP + diphosphate. Functionally, catalyzes the attachment of proline to tRNA(Pro) in a two-step reaction: proline is first activated by ATP to form Pro-AMP and then transferred to the acceptor end of tRNA(Pro). This chain is Proline--tRNA ligase, found in Clostridium botulinum (strain Okra / Type B1).